Here is a 366-residue protein sequence, read N- to C-terminus: GTP cyclohydrolase 1 type 2 homolog (366 aa).

Positions 64, 65, 102, 326, and 329 each coordinate a divalent metal cation.

This sequence belongs to the GTP cyclohydrolase I type 2/NIF3 family. As to quaternary structure, homohexamer.

In Staphylococcus epidermidis (strain ATCC 35984 / DSM 28319 / BCRC 17069 / CCUG 31568 / BM 3577 / RP62A), this protein is GTP cyclohydrolase 1 type 2 homolog.